Consider the following 679-residue polypeptide: Glycine--tRNA ligase beta subunit (679 aa).

This sequence belongs to the class-II aminoacyl-tRNA synthetase family. As to quaternary structure, tetramer of two alpha and two beta subunits.

Its subcellular location is the cytoplasm. The enzyme catalyses tRNA(Gly) + glycine + ATP = glycyl-tRNA(Gly) + AMP + diphosphate. The polypeptide is Glycine--tRNA ligase beta subunit (Streptococcus pyogenes serotype M6 (strain ATCC BAA-946 / MGAS10394)).